A 385-amino-acid polypeptide reads, in one-letter code: Iron uptake system component EfeM (385 aa).

The first 22 residues, 1–22, serve as a signal peptide directing secretion; the sequence is MNFTKIAVSAGCILALCAGCGA.

Belongs to the EfeM/EfeO family. In terms of assembly, component of the iron transporter efeUOB/M complex composed of EfeU, EfeM and EfeB; EfeU is essential for the complex formation.

It is found in the cell membrane. It localises to the membrane raft. Functionally, part of the iron transporter system efeUOB/M involved in iron import. Specifically binds Fe(3+), which is produced by EfeB-mediated oxidation of Fe(2+), and delivers it to the cell membrane permease EfeU. In Bacillus subtilis (strain 168), this protein is Iron uptake system component EfeM.